The following is a 344-amino-acid chain: tRNA N6-adenosine threonylcarbamoyltransferase (344 aa).

2 residues coordinate Fe cation: histidine 112 and histidine 116. Substrate-binding positions include 135-139, aspartate 168, glycine 181, and asparagine 271; that span reads LVSGG. Residue aspartate 299 participates in Fe cation binding. The interval 323–344 is disordered; it reads RARPRWPLDPEAEPVRGAGVKA.

The protein belongs to the KAE1 / TsaD family. Fe(2+) serves as cofactor.

The protein resides in the cytoplasm. The enzyme catalyses L-threonylcarbamoyladenylate + adenosine(37) in tRNA = N(6)-L-threonylcarbamoyladenosine(37) in tRNA + AMP + H(+). In terms of biological role, required for the formation of a threonylcarbamoyl group on adenosine at position 37 (t(6)A37) in tRNAs that read codons beginning with adenine. Is involved in the transfer of the threonylcarbamoyl moiety of threonylcarbamoyl-AMP (TC-AMP) to the N6 group of A37, together with TsaE and TsaB. TsaD likely plays a direct catalytic role in this reaction. This chain is tRNA N6-adenosine threonylcarbamoyltransferase, found in Erythrobacter litoralis (strain HTCC2594).